A 673-amino-acid polypeptide reads, in one-letter code: Flotillin family inner membrane protein sll1021 (673 aa).

A helical transmembrane segment spans residues 60–80 (LLFFPVVIIAVIFLILVTIFL). The disordered stretch occupies residues 639–673 (LQDPPSVSPPSAAVSEDDWPDLAPPTETNFSPEEI). Polar residues predominate over residues 664–673 (TETNFSPEEI).

Belongs to the band 7/mec-2 family. Flotillin subfamily. Homooligomerizes.

Its subcellular location is the cell inner membrane. The protein localises to the membrane raft. In terms of biological role, found in functional membrane microdomains (FMM) that may be equivalent to eukaryotic membrane rafts. FMMs are highly dynamic and increase in number as cells age. Flotillins are thought to be important factors in membrane fluidity. The sequence is that of Flotillin family inner membrane protein sll1021 from Synechocystis sp. (strain ATCC 27184 / PCC 6803 / Kazusa).